Here is a 561-residue protein sequence, read N- to C-terminus: Alpha-1D adrenergic receptor (561 aa).

Residues 1–90 (MTFRDILSVT…VGGLVVSAQG (90 aa)) are Extracellular-facing. A disordered region spans residues 10–71 (TFEGPRSSSS…SSTGEPGAAA (62 aa)). The segment covering 21–56 (GGSGAGGGAGTVGPEGGAVGGVPGATGGGAVVGTGS) has biased composition (gly residues). 2 N-linked (GlcNAc...) asparagine glycosylation sites follow: N60 and N76. The helical transmembrane segment at 91–115 (VGVGVFLAAFILTAVAGNLLVILSV) threads the bilayer. Over 116-127 (ACNRHLQTVTNY) the chain is Cytoplasmic. Residues 128–153 (FIVNLAVADLLLSAAVLPFSATMEVL) traverse the membrane as a helical segment. Residues 154–163 (GFWAFGRTFC) are Extracellular-facing. A helical transmembrane segment spans residues 164-186 (DVWAAVDVLCCTASILSLCTISV). The Cytoplasmic portion of the chain corresponds to 187 to 207 (DRYVGVRHSLKYPAIMTERKA). The chain crosses the membrane as a helical span at residues 208-232 (AAILALLWAVALVVSVGPLLGWKEP). Over 233-245 (VPPDERFCGITEE) the chain is Extracellular. A helical transmembrane segment spans residues 246-269 (VGYAIFSSVCSFYLPMAVIVVMYC). Over 270-342 (RVYVVARSTT…KFSREKKAAK (73 aa)) the chain is Cytoplasmic. A helical membrane pass occupies residues 343 to 367 (TLAIVVGVFVLCWFPFFFVLPLGSL). The Extracellular segment spans residues 368–374 (FPQLKPS). The helical transmembrane segment at 375-399 (EGVFKVIFWLGYFNSCVNPLIYPCS) threads the bilayer. The Cytoplasmic segment spans residues 400–561 (SREFKRAFLR…DYSNLRETDI (162 aa)). C413 carries S-palmitoyl cysteine lipidation. The segment at 452–481 (APLALTAHPGAGSADTPETQDSVSSSRKPA) is disordered. Polar residues predominate over residues 467-479 (TPETQDSVSSSRK).

It belongs to the G-protein coupled receptor 1 family. Adrenergic receptor subfamily. ADRA1D sub-subfamily. In terms of assembly, interacts with FLNA (via filamin repeat 21); increases PKA-mediated phosphorylation of FLNA. Post-translationally, palmitoylated. Palmitoylation by ZDHHC21 may increase the expression of the receptor and regulate downstream signaling. Vas deferens, hippocampus, cerebral cortex, aorta, brain stem, heart and spleen.

The protein resides in the cell membrane. Functionally, this alpha-adrenergic receptor mediates its effect through the influx of extracellular calcium. The chain is Alpha-1D adrenergic receptor (Adra1d) from Rattus norvegicus (Rat).